Here is an 88-residue protein sequence, read N- to C-terminus: Toxin RelE3 (88 aa).

Belongs to the RelE toxin family. Forms heterodimers with RelB3 and possibly a heterotetramer RelE3-RelB3(2)-RelE3 from 2 heterodimers. The heterotetramer is probably not very stable in solution.

Toxic component of a type II toxin-antitoxin (TA) system. Has RNase activity. Is very toxic upon expression in E.coli. Its toxic activity is probably neutralized by the cognate antitoxin RelB3. The protein is Toxin RelE3 (relE3) of Methanocaldococcus jannaschii (strain ATCC 43067 / DSM 2661 / JAL-1 / JCM 10045 / NBRC 100440) (Methanococcus jannaschii).